The following is a 287-amino-acid chain: MRQIAFYGKGGIGKSTTQQNTMAAMAEMGKKVMIVGCDPKADSTRLILHSKAQTSVIQLAAEKGSVEDLELDEVLVEGQWGIKCVESGGPEPGVGCAGRGVITSISYLEEAGAYEDLDFVTYDVLGDVVCGGFAMPIRQGKAQEIYIVTSGEMMAMYAANNIARGILKYAHSGGVRLGGLICNSRNTDREDELIIELARRLNTQMIHFIPRNNVVQHAELRRMTVIEYDPKNEQADQYRQLAKKIVDNDMKTIPTPITMDELEELLIEFGIMEQEDESIIGKAAAVA.

8-15 (GKGGIGKS) is a binding site for ATP. Residue Cys-96 participates in [4Fe-4S] cluster binding. ADP-ribosylarginine; by dinitrogenase reductase ADP-ribosyltransferase is present on Arg-99. Cys-130 provides a ligand contact to [4Fe-4S] cluster.

This sequence belongs to the NifH/BchL/ChlL family. In terms of assembly, homodimer. Requires [4Fe-4S] cluster as cofactor. In terms of processing, the reversible ADP-ribosylation of Arg-99 inactivates the nitrogenase reductase and regulates nitrogenase activity.

It carries out the reaction N2 + 8 reduced [2Fe-2S]-[ferredoxin] + 16 ATP + 16 H2O = H2 + 8 oxidized [2Fe-2S]-[ferredoxin] + 2 NH4(+) + 16 ADP + 16 phosphate + 6 H(+). Its function is as follows. The key enzymatic reactions in nitrogen fixation are catalyzed by the nitrogenase complex, which has 2 components: the iron protein and the molybdenum-iron protein. This Frankia casuarinae (strain DSM 45818 / CECT 9043 / HFP020203 / CcI3) protein is Nitrogenase iron protein.